A 357-amino-acid chain; its full sequence is 4-hydroxyphenylpyruvate dioxygenase (357 aa).

VOC domains are found at residues 12 to 129 (GFEF…LIDR) and 158 to 313 (IIDH…IFSE). H161, H240, and E322 together coordinate Fe cation.

The protein belongs to the 4HPPD family. Homotetramer. Fe cation serves as cofactor.

The catalysed reaction is 3-(4-hydroxyphenyl)pyruvate + O2 = homogentisate + CO2. It participates in amino-acid degradation; L-phenylalanine degradation; acetoacetate and fumarate from L-phenylalanine: step 3/6. The chain is 4-hydroxyphenylpyruvate dioxygenase (hpd) from Pseudomonas sp. (strain P.J. 874).